The chain runs to 327 residues: Tetraacyldisaccharide 4'-kinase (327 aa).

54-61 (TTGGTGKT) contacts ATP. The disordered stretch occupies residues 78–106 (PHILSRGHGGRERGPIGVNPNRSTPRDVG).

This sequence belongs to the LpxK family.

The enzyme catalyses a lipid A disaccharide + ATP = a lipid IVA + ADP + H(+). It functions in the pathway glycolipid biosynthesis; lipid IV(A) biosynthesis; lipid IV(A) from (3R)-3-hydroxytetradecanoyl-[acyl-carrier-protein] and UDP-N-acetyl-alpha-D-glucosamine: step 6/6. Its function is as follows. Transfers the gamma-phosphate of ATP to the 4'-position of a tetraacyldisaccharide 1-phosphate intermediate (termed DS-1-P) to form tetraacyldisaccharide 1,4'-bis-phosphate (lipid IVA). The protein is Tetraacyldisaccharide 4'-kinase of Gluconobacter oxydans (strain 621H) (Gluconobacter suboxydans).